Reading from the N-terminus, the 233-residue chain is MMPRLQQHKIILRQLGLQPYAPVSQAMHNFTEFRTDTTPDEIWLVEHQHVFTQGQAGKTEHVLMPGDIPVIQSDRGGQVTYHGPGQQVMYVMVDLKRAKIGVRQLVTAIENTVIETLAHFNIDSHARPDAPGVYVEQQKICSLGLRIRRGCSFHGLALNIAMDLEPFQRINPCGYAGMQMTQVSALQPGVTVADVQPVLVREFTRQLGYPTAKLQPWSLSDYLLSSHSSSSVL.

Residues 36-211 (DTTPDEIWLV…EFTRQLGYPT (176 aa)) enclose the BPL/LPL catalytic domain. Residues 75–82 (RGGQVTYH), 142–144 (SLG), and 155–157 (GLA) each bind substrate. Catalysis depends on Cys173, which acts as the Acyl-thioester intermediate.

It belongs to the LipB family.

It is found in the cytoplasm. It catalyses the reaction octanoyl-[ACP] + L-lysyl-[protein] = N(6)-octanoyl-L-lysyl-[protein] + holo-[ACP] + H(+). The protein operates within protein modification; protein lipoylation via endogenous pathway; protein N(6)-(lipoyl)lysine from octanoyl-[acyl-carrier-protein]: step 1/2. Its function is as follows. Catalyzes the transfer of endogenously produced octanoic acid from octanoyl-acyl-carrier-protein onto the lipoyl domains of lipoate-dependent enzymes. Lipoyl-ACP can also act as a substrate although octanoyl-ACP is likely to be the physiological substrate. This Yersinia pseudotuberculosis serotype O:3 (strain YPIII) protein is Octanoyltransferase.